The following is a 544-amino-acid chain: Chaperonin GroEL (544 aa).

Residues 30-33 (TLGP), lysine 51, 87-91 (DGTTT), glycine 415, 478-480 (NAA), and aspartate 494 contribute to the ATP site.

The protein belongs to the chaperonin (HSP60) family. In terms of assembly, forms a cylinder of 14 subunits composed of two heptameric rings stacked back-to-back. Interacts with the co-chaperonin GroES.

It is found in the cytoplasm. The catalysed reaction is ATP + H2O + a folded polypeptide = ADP + phosphate + an unfolded polypeptide.. Together with its co-chaperonin GroES, plays an essential role in assisting protein folding. The GroEL-GroES system forms a nano-cage that allows encapsulation of the non-native substrate proteins and provides a physical environment optimized to promote and accelerate protein folding. In Geobacter sulfurreducens (strain ATCC 51573 / DSM 12127 / PCA), this protein is Chaperonin GroEL.